Reading from the N-terminus, the 334-residue chain is Protein-methionine-sulfoxide reductase catalytic subunit MsrP (334 aa).

Residues 1–44 (MKKNQFLKESDVTAESVFFMKRRQVLKALGISATALSLPHAAHA) constitute a signal peptide (tat-type signal). Residues N88, 91–92 (YE), C146, T181, N233, R238, and 249–251 (GIK) contribute to the Mo-molybdopterin site.

The protein belongs to the MsrP family. Heterodimer of a catalytic subunit (MsrP) and a heme-binding subunit (MsrQ). Requires Mo-molybdopterin as cofactor. In terms of processing, predicted to be exported by the Tat system. The position of the signal peptide cleavage has not been experimentally proven.

It localises to the periplasm. The catalysed reaction is L-methionyl-[protein] + a quinone + H2O = L-methionyl-(S)-S-oxide-[protein] + a quinol. It carries out the reaction L-methionyl-[protein] + a quinone + H2O = L-methionyl-(R)-S-oxide-[protein] + a quinol. Part of the MsrPQ system that repairs oxidized periplasmic proteins containing methionine sulfoxide residues (Met-O), using respiratory chain electrons. Thus protects these proteins from oxidative-stress damage caused by reactive species of oxygen and chlorine generated by the host defense mechanisms. MsrPQ is essential for the maintenance of envelope integrity under bleach stress, rescuing a wide series of structurally unrelated periplasmic proteins from methionine oxidation, including the primary periplasmic chaperone SurA and the lipoprotein Pal. The catalytic subunit MsrP is non-stereospecific, being able to reduce both (R-) and (S-) diastereoisomers of methionine sulfoxide. In Escherichia coli (strain K12 / MC4100 / BW2952), this protein is Protein-methionine-sulfoxide reductase catalytic subunit MsrP.